The following is a 468-amino-acid chain: Fibrinogen beta chain (468 aa).

A Pyrrolidone carboxylic acid modification is found at glutamine 1. Residues 1 to 10 (QFPTDYDEGQ) show a composition bias toward acidic residues. Residues 1-54 (QFPTDYDEGQDDRPKVGLGARGHRPYDKKKEEAPSLRPVPPPISGGGYRARPAT) form a disordered region. An O-linked (GalNAc...) threonine glycan is attached at threonine 4. At tyrosine 6 the chain carries Sulfotyrosine. Basic and acidic residues predominate over residues 24–34 (RPYDKKKEEAP). Positions 88–204 (KLQDTLVRQE…TQMEYCRTPC (117 aa)) form a coiled coil. Disulfide bonds link cysteine 208–cysteine 293 and cysteine 218–cysteine 247. One can recognise a Fibrinogen C-terminal domain in the interval 209–465 (NIPVVSGKEC…KMSMKIRPYF (257 aa)). Asparagine 371 is a glycosylation site (N-linked (GlcNAc...) asparagine). A disulfide bond links cysteine 401 and cysteine 414.

Heterohexamer; disulfide linked. Contains 2 sets of 3 non-identical chains (alpha, beta and gamma). The 2 heterotrimers are in head to head conformation with the N-termini in a small central domain. In terms of processing, conversion of fibrinogen to fibrin is triggered by thrombin, which cleaves fibrinopeptides A and B from alpha and beta chains, and thus exposes the N-terminal polymerization sites responsible for the formation of the soft clot. The soft clot is converted into the hard clot by factor XIIIA which catalyzes the epsilon-(gamma-glutamyl)lysine cross-linking between gamma chains (stronger) and between alpha chains (weaker) of different monomers. In terms of tissue distribution, detected in blood plasma (at protein level).

It is found in the secreted. Cleaved by the protease thrombin to yield monomers which, together with fibrinogen alpha (FGA) and fibrinogen gamma (FGG), polymerize to form an insoluble fibrin matrix. Fibrin has a major function in hemostasis as one of the primary components of blood clots. In addition, functions during the early stages of wound repair to stabilize the lesion and guide cell migration during re-epithelialization. Was originally thought to be essential for platelet aggregation, based on in vitro studies using anticoagulated blood. However subsequent studies have shown that it is not absolutely required for thrombus formation in vivo. Enhances expression of SELP in activated platelets. Maternal fibrinogen is essential for successful pregnancy. Fibrin deposition is also associated with infection, where it protects against IFNG-mediated hemorrhage. May also facilitate the antibacterial immune response via both innate and T-cell mediated pathways. The polypeptide is Fibrinogen beta chain (FGB) (Bos taurus (Bovine)).